The sequence spans 28 residues: Expansin-B1 (28 aa).

The region spanning 11–28 (MLLSLQGPXSLRMVSESG) is the Expansin-like CBD domain.

It belongs to the expansin family. Expansin B subfamily.

The protein resides in the secreted. It localises to the cell wall. It is found in the membrane. May cause loosening and extension of plant cell walls by disrupting non-covalent bonding between cellulose microfibrils and matrix glucans. In Pseudotsuga menziesii (Douglas-fir), this protein is Expansin-B1.